The chain runs to 188 residues: Elongation factor P (188 aa).

It belongs to the elongation factor P family.

It is found in the cytoplasm. It participates in protein biosynthesis; polypeptide chain elongation. Involved in peptide bond synthesis. Stimulates efficient translation and peptide-bond synthesis on native or reconstituted 70S ribosomes in vitro. Probably functions indirectly by altering the affinity of the ribosome for aminoacyl-tRNA, thus increasing their reactivity as acceptors for peptidyl transferase. This Leptospira biflexa serovar Patoc (strain Patoc 1 / Ames) protein is Elongation factor P.